Reading from the N-terminus, the 248-residue chain is Probable transcriptional regulatory protein MYPE8020 (248 aa).

This sequence belongs to the TACO1 family.

It is found in the cytoplasm. In Malacoplasma penetrans (strain HF-2) (Mycoplasma penetrans), this protein is Probable transcriptional regulatory protein MYPE8020.